The following is a 233-amino-acid chain: Large ribosomal subunit protein uL1 (233 aa).

Belongs to the universal ribosomal protein uL1 family. In terms of assembly, part of the 50S ribosomal subunit.

In terms of biological role, binds directly to 23S rRNA. The L1 stalk is quite mobile in the ribosome, and is involved in E site tRNA release. Functionally, protein L1 is also a translational repressor protein, it controls the translation of the L11 operon by binding to its mRNA. The chain is Large ribosomal subunit protein uL1 from Deinococcus deserti (strain DSM 17065 / CIP 109153 / LMG 22923 / VCD115).